A 386-amino-acid chain; its full sequence is Acetylornithine aminotransferase (386 aa).

Pyridoxal 5'-phosphate is bound by residues 96–97 (GA) and Phe-123. Arg-126 is a binding site for N(2)-acetyl-L-ornithine. 208–211 (DEVQ) is a pyridoxal 5'-phosphate binding site. N6-(pyridoxal phosphate)lysine is present on Lys-237. Ser-265 serves as a coordination point for N(2)-acetyl-L-ornithine. Thr-266 lines the pyridoxal 5'-phosphate pocket.

This sequence belongs to the class-III pyridoxal-phosphate-dependent aminotransferase family. ArgD subfamily. As to quaternary structure, homodimer. Pyridoxal 5'-phosphate serves as cofactor.

Its subcellular location is the cytoplasm. It catalyses the reaction N(2)-acetyl-L-ornithine + 2-oxoglutarate = N-acetyl-L-glutamate 5-semialdehyde + L-glutamate. It participates in amino-acid biosynthesis; L-arginine biosynthesis; N(2)-acetyl-L-ornithine from L-glutamate: step 4/4. The polypeptide is Acetylornithine aminotransferase (Bacillus cereus (strain ATCC 14579 / DSM 31 / CCUG 7414 / JCM 2152 / NBRC 15305 / NCIMB 9373 / NCTC 2599 / NRRL B-3711)).